The following is a 387-amino-acid chain: uncharacterized protein (387 aa).

The N-terminal stretch at 1–27 (MKKWMITIAMLILAGIALFVFISPLKS) is a signal peptide.

This is an uncharacterized protein from Bacillus subtilis (strain 168).